The primary structure comprises 170 residues: Shikimate kinase (170 aa).

11–16 (LSGKST) serves as a coordination point for ATP. Ser15 provides a ligand contact to Mg(2+). Asp33, Arg57, and Gly79 together coordinate substrate. Arg119 is a binding site for ATP. Arg137 serves as a coordination point for substrate.

The protein belongs to the shikimate kinase family. Monomer. Requires Mg(2+) as cofactor.

Its subcellular location is the cytoplasm. The enzyme catalyses shikimate + ATP = 3-phosphoshikimate + ADP + H(+). Its pathway is metabolic intermediate biosynthesis; chorismate biosynthesis; chorismate from D-erythrose 4-phosphate and phosphoenolpyruvate: step 5/7. Functionally, catalyzes the specific phosphorylation of the 3-hydroxyl group of shikimic acid using ATP as a cosubstrate. In Clostridium botulinum (strain 657 / Type Ba4), this protein is Shikimate kinase.